We begin with the raw amino-acid sequence, 340 residues long: Phosphate acyltransferase (340 aa).

This sequence belongs to the PlsX family. In terms of assembly, homodimer. Probably interacts with PlsY.

It localises to the cytoplasm. The catalysed reaction is a fatty acyl-[ACP] + phosphate = an acyl phosphate + holo-[ACP]. Its pathway is lipid metabolism; phospholipid metabolism. In terms of biological role, catalyzes the reversible formation of acyl-phosphate (acyl-PO(4)) from acyl-[acyl-carrier-protein] (acyl-ACP). This enzyme utilizes acyl-ACP as fatty acyl donor, but not acyl-CoA. In Leptospira biflexa serovar Patoc (strain Patoc 1 / ATCC 23582 / Paris), this protein is Phosphate acyltransferase.